We begin with the raw amino-acid sequence, 866 residues long: DNA replication licensing factor MCM4 (866 aa).

Disordered stretches follow at residues 1–67 (MSSP…TSPA), 81–107 (SPLN…TPLR), and 124–145 (GGGS…PVSE). Polar residues-rich tracts occupy residues 47-63 (DNIS…SLPA) and 81-93 (SPLN…SMGS). Ser55 and Ser81 each carry phosphoserine. At Thr87 the chain carries Phosphothreonine. Residues 460 to 669 (IYDRLARAIA…FDKRLASHLV (210 aa)) form the MCM domain. Residue 512–519 (GDPGTSKS) participates in ATP binding. The Arginine finger motif lies at 644–647 (SRFD).

The protein belongs to the MCM family. Component of the Mcm2-7 complex. The complex forms a toroidal hexameric ring with the proposed subunit order Mcm2-Mcm6-Mcm4-Mcm7-Mcm3-Mcm5. Phosphorylated by the catalytic component of the Dbf4-dependent kinase (DDK) complex Cdc7.

Its subcellular location is the nucleus. The catalysed reaction is ATP + H2O = ADP + phosphate + H(+). In terms of biological role, acts as a component of the Mcm2-7 complex (Mcm complex) which is the putative replicative helicase essential for 'once per cell cycle' DNA replication initiation and elongation in eukaryotic cells. The active ATPase sites in the Mcm2-7 ring are formed through the interaction surfaces of two neighboring subunits such that a critical structure of a conserved arginine finger motif is provided in trans relative to the ATP-binding site of the Walker A box of the adjacent subunit. The six ATPase active sites, however, are likely to contribute differentially to the complex helicase activity. Required for DNA replication and cell proliferation. Essential role in mitotic DNA replication but not in endoreplication. In Drosophila melanogaster (Fruit fly), this protein is DNA replication licensing factor MCM4 (dpa).